The chain runs to 98 residues: PqqA binding protein (98 aa).

This sequence belongs to the PqqD family. As to quaternary structure, monomer. Interacts with PqqE.

It functions in the pathway cofactor biosynthesis; pyrroloquinoline quinone biosynthesis. Its function is as follows. Functions as a PqqA binding protein and presents PqqA to PqqE, in the pyrroloquinoline quinone (PQQ) biosynthetic pathway. This chain is PqqA binding protein, found in Pseudomonas syringae pv. tomato (strain ATCC BAA-871 / DC3000).